A 155-amino-acid polypeptide reads, in one-letter code: Endoribonuclease YbeY (155 aa).

3 residues coordinate Zn(2+): His114, His118, and His124.

It belongs to the endoribonuclease YbeY family. It depends on Zn(2+) as a cofactor.

Its subcellular location is the cytoplasm. In terms of biological role, single strand-specific metallo-endoribonuclease involved in late-stage 70S ribosome quality control and in maturation of the 3' terminus of the 16S rRNA. In Citrobacter koseri (strain ATCC BAA-895 / CDC 4225-83 / SGSC4696), this protein is Endoribonuclease YbeY.